The sequence spans 300 residues: Ribosomal RNA small subunit methyltransferase H (300 aa).

Residues 46-48 (GGH), D65, F92, D107, and Q114 contribute to the S-adenosyl-L-methionine site.

Belongs to the methyltransferase superfamily. RsmH family.

It is found in the cytoplasm. It carries out the reaction cytidine(1402) in 16S rRNA + S-adenosyl-L-methionine = N(4)-methylcytidine(1402) in 16S rRNA + S-adenosyl-L-homocysteine + H(+). Its function is as follows. Specifically methylates the N4 position of cytidine in position 1402 (C1402) of 16S rRNA. The sequence is that of Ribosomal RNA small subunit methyltransferase H from Prochlorococcus marinus subsp. pastoris (strain CCMP1986 / NIES-2087 / MED4).